We begin with the raw amino-acid sequence, 1537 residues long: DNA-directed RNA polymerase subunit beta' (1537 aa).

Zn(2+)-binding residues include C57, C59, C72, and C75. Mg(2+)-binding residues include D746, D748, and D750. Residues C1120, C1201, C1208, and C1211 each contribute to the Zn(2+) site. Residues 1502 to 1537 (LEKYGQTSVSTDAVTGSQRYDDTRPSSTSINPSYGD) are disordered. Composition is skewed to polar residues over residues 1506 to 1519 (GQTS…TGSQ) and 1526 to 1537 (PSSTSINPSYGD).

It belongs to the RNA polymerase beta' chain family. In terms of assembly, the RNAP catalytic core consists of 2 alpha, 1 beta, 1 beta' and 1 omega subunit. When a sigma factor is associated with the core the holoenzyme is formed, which can initiate transcription. Mg(2+) is required as a cofactor. Requires Zn(2+) as cofactor.

The catalysed reaction is RNA(n) + a ribonucleoside 5'-triphosphate = RNA(n+1) + diphosphate. Functionally, DNA-dependent RNA polymerase catalyzes the transcription of DNA into RNA using the four ribonucleoside triphosphates as substrates. The sequence is that of DNA-directed RNA polymerase subunit beta' from Deinococcus geothermalis (strain DSM 11300 / CIP 105573 / AG-3a).